The following is a 137-amino-acid chain: Large ribosomal subunit protein uL16 (137 aa).

Residues 1–16 (MLQPKRTKFRKVHTGR) show a composition bias toward basic residues. Residues 1–22 (MLQPKRTKFRKVHTGRNRGLAQ) form a disordered region.

Belongs to the universal ribosomal protein uL16 family. Part of the 50S ribosomal subunit.

Functionally, binds 23S rRNA and is also seen to make contacts with the A and possibly P site tRNAs. The polypeptide is Large ribosomal subunit protein uL16 (Idiomarina loihiensis (strain ATCC BAA-735 / DSM 15497 / L2-TR)).